A 304-amino-acid polypeptide reads, in one-letter code: UDP-N-acetylenolpyruvoylglucosamine reductase (304 aa).

The FAD-binding PCMH-type domain occupies 32–198 (RVGGPADILV…LSAELELQEG (167 aa)). R177 is an active-site residue. Catalysis depends on S227, which acts as the Proton donor. E297 is a catalytic residue.

Belongs to the MurB family. FAD serves as cofactor.

Its subcellular location is the cytoplasm. It carries out the reaction UDP-N-acetyl-alpha-D-muramate + NADP(+) = UDP-N-acetyl-3-O-(1-carboxyvinyl)-alpha-D-glucosamine + NADPH + H(+). It participates in cell wall biogenesis; peptidoglycan biosynthesis. Its function is as follows. Cell wall formation. In Clostridioides difficile (strain 630) (Peptoclostridium difficile), this protein is UDP-N-acetylenolpyruvoylglucosamine reductase.